Consider the following 67-residue polypeptide: Neurotoxin Cex9 (67 aa).

The LCN-type CS-alpha/beta domain occupies lysine 1 to glycine 65. Intrachain disulfides connect cysteine 11–cysteine 64, cysteine 15–cysteine 40, cysteine 24–cysteine 45, and cysteine 28–cysteine 47. Residue cysteine 64 is modified to Cysteine amide. Residues glycine 65–lysine 67 constitute a propeptide that is removed on maturation.

It belongs to the long (4 C-C) scorpion toxin superfamily. Sodium channel inhibitor family. Beta subfamily. Expressed by the venom gland.

The protein resides in the secreted. Beta toxins bind voltage-independently at site-4 of sodium channels (Nav) and shift the voltage of activation toward more negative potentials thereby affecting sodium channel activation and promoting spontaneous and repetitive firing. In Centruroides exilicauda (Bark scorpion), this protein is Neurotoxin Cex9.